We begin with the raw amino-acid sequence, 469 residues long: Ribulose bisphosphate carboxylase large chain (469 aa).

Lys5 bears the N6,N6,N6-trimethyllysine mark. Residues Asn114 and Thr164 each coordinate substrate. The active-site Proton acceptor is the Lys166. Lys168 contributes to the substrate binding site. Mg(2+) contacts are provided by Lys192, Asp194, and Glu195. Lys192 is modified (N6-carboxylysine). His285 (proton acceptor) is an active-site residue. Substrate is bound by residues Arg286, His318, and Ser370.

The protein belongs to the RuBisCO large chain family. Type I subfamily. As to quaternary structure, heterohexadecamer of 8 large chains and 8 small chains; disulfide-linked. The disulfide link is formed within the large subunit homodimers. Mg(2+) serves as cofactor. Post-translationally, the disulfide bond which can form in the large chain dimeric partners within the hexadecamer appears to be associated with oxidative stress and protein turnover.

It localises to the plastid. The protein localises to the chloroplast. It carries out the reaction 2 (2R)-3-phosphoglycerate + 2 H(+) = D-ribulose 1,5-bisphosphate + CO2 + H2O. The enzyme catalyses D-ribulose 1,5-bisphosphate + O2 = 2-phosphoglycolate + (2R)-3-phosphoglycerate + 2 H(+). Functionally, ruBisCO catalyzes two reactions: the carboxylation of D-ribulose 1,5-bisphosphate, the primary event in carbon dioxide fixation, as well as the oxidative fragmentation of the pentose substrate in the photorespiration process. Both reactions occur simultaneously and in competition at the same active site. This is Ribulose bisphosphate carboxylase large chain from Antirhea lucida (Palo iloron).